We begin with the raw amino-acid sequence, 160 residues long: SsrA-binding protein (160 aa).

The interval 136-160 (KRHVEKERDANREVQRAMRSKGKDD) is disordered.

It belongs to the SmpB family.

The protein resides in the cytoplasm. Required for rescue of stalled ribosomes mediated by trans-translation. Binds to transfer-messenger RNA (tmRNA), required for stable association of tmRNA with ribosomes. tmRNA and SmpB together mimic tRNA shape, replacing the anticodon stem-loop with SmpB. tmRNA is encoded by the ssrA gene; the 2 termini fold to resemble tRNA(Ala) and it encodes a 'tag peptide', a short internal open reading frame. During trans-translation Ala-aminoacylated tmRNA acts like a tRNA, entering the A-site of stalled ribosomes, displacing the stalled mRNA. The ribosome then switches to translate the ORF on the tmRNA; the nascent peptide is terminated with the 'tag peptide' encoded by the tmRNA and targeted for degradation. The ribosome is freed to recommence translation, which seems to be the essential function of trans-translation. This chain is SsrA-binding protein, found in Ectopseudomonas mendocina (strain ymp) (Pseudomonas mendocina).